A 98-amino-acid chain; its full sequence is UPF0235 protein Pmen_4153 (98 aa).

This sequence belongs to the UPF0235 family.

This chain is UPF0235 protein Pmen_4153, found in Ectopseudomonas mendocina (strain ymp) (Pseudomonas mendocina).